A 456-amino-acid chain; its full sequence is ATP synthase subunit beta (456 aa).

An ATP-binding site is contributed by 135–142 (GGAGVGKT).

The protein belongs to the ATPase alpha/beta chains family. In terms of assembly, F-type ATPases have 2 components, CF(1) - the catalytic core - and CF(0) - the membrane proton channel. CF(1) has five subunits: alpha(3), beta(3), gamma(1), delta(1), epsilon(1). CF(0) has four main subunits: a(1), b(1), b'(1) and c(9-12).

The protein resides in the cellular thylakoid membrane. It carries out the reaction ATP + H2O + 4 H(+)(in) = ADP + phosphate + 5 H(+)(out). Functionally, produces ATP from ADP in the presence of a proton gradient across the membrane. The catalytic sites are hosted primarily by the beta subunits. In Acaryochloris marina (strain MBIC 11017), this protein is ATP synthase subunit beta (atpD).